A 193-amino-acid chain; its full sequence is MTELALILVSTVLVNNFVLVKFLGLCPFMGVSRQLETAMGMALATTFVLTLSAVCSYLAYEYLLAPLGVEYLRTITFIMVIAVVVQFTEMAVRKTSPLLHQVLGIYLPLITTNCAVLGVALLNLQEQNSLLQSAVYGFGAAAGFSLVLVLFAALRERLEVADVPLPFRGASVALVTAGILSMGFMGFAGLVRL.

6 consecutive transmembrane segments (helical) span residues 4-24 (LALILVSTVLVNNFVLVKFLG), 38-58 (AMGMALATTFVLTLSAVCSYL), 65-85 (APLGVEYLRTITFIMVIAVVV), 102-122 (VLGIYLPLITTNCAVLGVALL), 134-154 (AVYGFGAAAGFSLVLVLFAAL), and 171-191 (SVALVTAGILSMGFMGFAGLV).

It belongs to the NqrDE/RnfAE family. The complex is composed of six subunits: RnfA, RnfB, RnfC, RnfD, RnfE and RnfG.

The protein resides in the cell inner membrane. Part of a membrane-bound complex that couples electron transfer with translocation of ions across the membrane. This Alkalilimnicola ehrlichii (strain ATCC BAA-1101 / DSM 17681 / MLHE-1) protein is Ion-translocating oxidoreductase complex subunit A.